A 536-amino-acid polypeptide reads, in one-letter code: Inactive phospholipase D5 (536 aa).

Residues 69–89 (IVIFALVCCFAILVALIFSAV) traverse the membrane as a helical segment. N-linked (GlcNAc...) asparagine glycosylation is present at Asn121. Residues 215–242 (NKGRLQSSFWIVDKQHVYIGSAGLDWQS) form the PLD phosphodiesterase 1 domain. N-linked (GlcNAc...) asparagine glycosylation occurs at Asn302. One can recognise a PLD phosphodiesterase 2 domain in the interval 434–460 (FPRLNRNKYMVTDGAAYIGNFDWVGND).

Belongs to the phospholipase D family.

It localises to the membrane. The chain is Inactive phospholipase D5 (PLD5) from Homo sapiens (Human).